The sequence spans 255 residues: Small ribosomal subunit protein uS2 (255 aa).

Positions 233–255 are disordered; that stretch reads DFVAEEAASEESLEELAEIVEGK.

This sequence belongs to the universal ribosomal protein uS2 family.

This Lactococcus lactis subsp. lactis (strain IL1403) (Streptococcus lactis) protein is Small ribosomal subunit protein uS2 (rpsB).